The following is a 121-amino-acid chain: Auxin-responsive protein SAUR32 (121 aa).

The protein belongs to the ARG7 family. In terms of tissue distribution, expressed in roots, leaves and stems.

It localises to the nucleus. The protein localises to the cytoplasm. May play a role in the apical hook development. The polypeptide is Auxin-responsive protein SAUR32 (Arabidopsis thaliana (Mouse-ear cress)).